We begin with the raw amino-acid sequence, 408 residues long: Phosphoglycerate kinase (408 aa).

Substrate contacts are provided by residues 24-26 (DLN), Arg-39, 62-65 (HLGR), Arg-121, and Arg-161. ATP contacts are provided by residues Lys-211, Gly-307, Glu-338, and 364–367 (GGDS).

The protein belongs to the phosphoglycerate kinase family. In terms of assembly, monomer.

It is found in the cytoplasm. It catalyses the reaction (2R)-3-phosphoglycerate + ATP = (2R)-3-phospho-glyceroyl phosphate + ADP. It functions in the pathway carbohydrate degradation; glycolysis; pyruvate from D-glyceraldehyde 3-phosphate: step 2/5. The polypeptide is Phosphoglycerate kinase (Arthrobacter sp. (strain FB24)).